Here is a 412-residue protein sequence, read N- to C-terminus: MPIKILMPALSPTMTEGNLARWLKKEGDKVNPGEVIAEIETDKATMEVEAVDEGILAKIVIPQNSQNVPVNSLIAVLSEEGEEKTDIDAFIAKNNSVSPSPKTDANLPKPHENIANVEEQVTVIKHDVSRIFASPLAKRLAKMRNIRFESVKGSGPHGRIVKQDILSYTPSTAHNKIVSRNPEEYRLVPNNNIRKIIAKRLLESKQTVPHFYLSIECNVDKLLDIREDINKFFSEDKSTRISVNDFIILAVAKALQEVPNANASWGEDAIRYYNNVDISVAVAIENGLVTPIVKNANQKNILELSREMKALIKKAKDNKLTPEEFQGGGFTISNLGMYGIKNFNAIINPPQSCIMGVGASAKRAIVKNDQITIATIMDVTLSADHRVVDGAVGAEFLVAFKKFIESPVLMLI.

A Lipoyl-binding domain is found at 2-78 (PIKILMPALS…PVNSLIAVLS (77 aa)). An N6-lipoyllysine modification is found at K43. A Peripheral subunit-binding (PSBD) domain is found at 132-169 (FASPLAKRLAKMRNIRFESVKGSGPHGRIVKQDILSYT). H385 is an active-site residue.

Belongs to the 2-oxoacid dehydrogenase family. As to quaternary structure, forms a 24-polypeptide structural core with octahedral symmetry. Requires (R)-lipoate as cofactor.

It carries out the reaction N(6)-[(R)-dihydrolipoyl]-L-lysyl-[protein] + acetyl-CoA = N(6)-[(R)-S(8)-acetyldihydrolipoyl]-L-lysyl-[protein] + CoA. The pyruvate dehydrogenase complex catalyzes the overall conversion of pyruvate to acetyl-CoA and CO(2). It contains multiple copies of three enzymatic components: pyruvate dehydrogenase (E1), dihydrolipoamide acetyltransferase (E2) and lipoamide dehydrogenase (E3). The protein is Dihydrolipoyllysine-residue acetyltransferase component of pyruvate dehydrogenase complex (pdhC) of Rickettsia conorii (strain ATCC VR-613 / Malish 7).